A 225-amino-acid polypeptide reads, in one-letter code: Enolase-phosphatase E1 (225 aa).

The protein belongs to the HAD-like hydrolase superfamily. MasA/MtnC family. In terms of assembly, monomer. Requires Mg(2+) as cofactor.

The enzyme catalyses 5-methylsulfanyl-2,3-dioxopentyl phosphate + H2O = 1,2-dihydroxy-5-(methylsulfanyl)pent-1-en-3-one + phosphate. It functions in the pathway amino-acid biosynthesis; L-methionine biosynthesis via salvage pathway; L-methionine from S-methyl-5-thio-alpha-D-ribose 1-phosphate: step 3/6. The protein operates within amino-acid biosynthesis; L-methionine biosynthesis via salvage pathway; L-methionine from S-methyl-5-thio-alpha-D-ribose 1-phosphate: step 4/6. Its function is as follows. Bifunctional enzyme that catalyzes the enolization of 2,3-diketo-5-methylthiopentyl-1-phosphate (DK-MTP-1-P) into the intermediate 2-hydroxy-3-keto-5-methylthiopentenyl-1-phosphate (HK-MTPenyl-1-P), which is then dephosphorylated to form the acireductone 1,2-dihydroxy-3-keto-5-methylthiopentene (DHK-MTPene). This Shewanella loihica (strain ATCC BAA-1088 / PV-4) protein is Enolase-phosphatase E1.